The chain runs to 1193 residues: Protein diaphanous homolog 3 (1193 aa).

Basic residues predominate over residues 1-10; sequence MERHQPRLHH. Residues 1–57 form a disordered region; the sequence is MERHQPRLHHPAQGSAAGTPYPSSASLRGCRESKMPRRKGPQHPPPPSGPEEPGEKR. Ser-26 carries the phosphoserine modification. Positions 36–60 match the Nuclear localization signal motif; it reads PRRKGPQHPPPPSGPEEPGEKRPKF. Thr-68 carries the phosphothreonine modification. Phosphoserine is present on residues Ser-77 and Ser-175. The region spanning 114 to 476 is the GBD/FH3 domain; that stretch reads PKPLSENELL…QIVLHRDGMD (363 aa). Residues 497-554 are a coiled coil; that stretch reads IDQAKLEEFEEKASELYKKFEKEFTDHQETQAELQKKEAKINELQAELQAFKSQFGAL. Residues 558-622 are disordered; the sequence is CNIPLPPSKE…PPPLGFLGGQ (65 aa). An FH1 domain is found at 561–631; that stretch reads PLPPSKEGGT…QNSPPLPILP (71 aa). A compositionally biased stretch (pro residues) spans 575-600; the sequence is LPPPPPLPSGGGVPPPPPPPPPPPLP. A Phosphoserine modification is found at Ser-624. Positions 636–1034 constitute an FH2 domain; it reads PKKEFKPEIS…EKRVRIAKEL (399 aa). Residues 1013 to 1056 adopt a coiled-coil conformation; the sequence is KENIKKREAEEKEKRVRIAKELAERERLERQQKKKRLLEMKTEG. A DAD domain is found at 1057–1087; that stretch reads DETGVMDNLLEALQSGAAFRDRRKRTPMPKD. Ser-1093 and Ser-1179 each carry phosphoserine. The Nuclear export signal motif lies at 1184–1193; it reads EALLARLRAL.

It belongs to the formin homology family. Diaphanous subfamily. In terms of processing, ubiquitinated.

The protein resides in the cytoplasm. It localises to the nucleus. Actin nucleation and elongation factor required for the assembly of F-actin structures, such as actin cables and stress fibers. Required for cytokinesis, stress fiber formation and transcriptional activation of the serum response factor. Binds to GTP-bound form of Rho and to profilin: acts in a Rho-dependent manner to recruit profilin to the membrane, where it promotes actin polymerization. DFR proteins couple Rho and Src tyrosine kinase during signaling and the regulation of actin dynamics. Also acts as an actin nucleation and elongation factor in the nucleus by promoting nuclear actin polymerization inside the nucleus to drive serum-dependent SRF-MRTFA activity. The protein is Protein diaphanous homolog 3 (DIAPH3) of Homo sapiens (Human).